Reading from the N-terminus, the 101-residue chain is Small ribosomal subunit protein uS14 (101 aa).

Residues 1 to 11 (MAKKSAIETNE) show a composition bias toward basic and acidic residues. The tract at residues 1–24 (MAKKSAIETNERRRKLSQSKAAKR) is disordered. The span at 12–24 (RRRKLSQSKAAKR) shows a compositional bias: basic residues.

This sequence belongs to the universal ribosomal protein uS14 family. In terms of assembly, part of the 30S ribosomal subunit. Contacts proteins S3 and S10.

In terms of biological role, binds 16S rRNA, required for the assembly of 30S particles and may also be responsible for determining the conformation of the 16S rRNA at the A site. This chain is Small ribosomal subunit protein uS14, found in Azorhizobium caulinodans (strain ATCC 43989 / DSM 5975 / JCM 20966 / LMG 6465 / NBRC 14845 / NCIMB 13405 / ORS 571).